The following is a 267-amino-acid chain: Phosphatidylcholine synthase (267 aa).

Topologically, residues 1–42 (MILWRIVRPGAAMAYVQTGLVLIAEAMDTQQDSLKPRPAMRA) are cytoplasmic. Residues 43 to 63 (AAFSVHVFTAFGAAIALLAML) form a helical membrane-spanning segment. Residues 64–69 (EAVREH) lie on the Periplasmic side of the membrane. The chain crosses the membrane as a helical span at residues 70–90 (WAAMFQWLGVALIIDAIDGPI). Residues 91–102 (ARRLDVKNVQPN) are Cytoplasmic-facing. The helical transmembrane segment at 103-123 (WSGDVLDLVVDFVTYVFVPAY) threads the bilayer. A124 is a topological domain (periplasmic). The helical transmembrane segment at 125–145 (IVASGLLLPVAAPLLGVAIIV) threads the bilayer. The Cytoplasmic segment spans residues 146-162 (TSALYFADLRMKADDNH). The chain crosses the membrane as a helical span at residues 163–183 (FRGFPALWNAAAFYLFLLHWP). Position 184 (P184) is a topological domain, periplasmic. The helical transmembrane segment at 185–205 (LWSTLLVAALVVLTFVPFHVL) threads the bilayer. Topologically, residues 206 to 215 (HPVRVVRLRW) are cytoplasmic. A helical membrane pass occupies residues 216-236 (LTMSLIGIWAVLSLYTLDMDF). The Periplasmic segment spans residues 237-239 (RVG). A helical membrane pass occupies residues 240–260 (PGVTLALCAIALWISFSDALI). Topologically, residues 261-267 (RFARSFA) are cytoplasmic.

Belongs to the CDP-alcohol phosphatidyltransferase class-I family. The cofactor is Mn(2+).

It localises to the cell inner membrane. The catalysed reaction is a CDP-1,2-diacyl-sn-glycerol + choline = a 1,2-diacyl-sn-glycero-3-phosphocholine + CMP + H(+). Functionally, condenses choline with CDP-diglyceride to produce phosphatidylcholine and CMP. This Bradyrhizobium diazoefficiens (strain JCM 10833 / BCRC 13528 / IAM 13628 / NBRC 14792 / USDA 110) protein is Phosphatidylcholine synthase.